We begin with the raw amino-acid sequence, 97 residues long: uncharacterized protein (97 aa).

An N-terminal signal peptide occupies residues 1 to 21; it reads MLLHGLGRMNIIFICFPSLAC.

This is an uncharacterized protein from Schizosaccharomyces pombe (strain 972 / ATCC 24843) (Fission yeast).